A 299-amino-acid polypeptide reads, in one-letter code: dTDP-4-dehydrorhamnose reductase (299 aa).

NADH contacts are provided by residues 10 to 12 (GQV), D30, 39 to 40 (DF), and 63 to 65 (AHT). 11–12 (QV) serves as a coordination point for NADPH. NADPH contacts are provided by residues 39 to 40 (DF), 63 to 65 (AHT), and Y102. DTDP-beta-L-rhamnose is bound at residue 104 to 105 (TD). Y128 and K132 together coordinate NADH. NADPH is bound by residues Y128 and K132. Y128 acts as the Proton donor/acceptor in catalysis. Residue W153 participates in dTDP-beta-L-rhamnose binding.

This sequence belongs to the dTDP-4-dehydrorhamnose reductase family. In terms of assembly, homodimer. Mg(2+) serves as cofactor.

The catalysed reaction is dTDP-beta-L-rhamnose + NADP(+) = dTDP-4-dehydro-beta-L-rhamnose + NADPH + H(+). It functions in the pathway carbohydrate biosynthesis; dTDP-L-rhamnose biosynthesis. It participates in bacterial outer membrane biogenesis; LPS O-antigen biosynthesis. Its function is as follows. Involved in the biosynthesis of the dTDP-L-rhamnose which is an important component of lipopolysaccharide (LPS). Catalyzes the reduction of dTDP-6-deoxy-L-lyxo-4-hexulose to yield dTDP-L-rhamnose. RmlD uses NADH and NADPH nearly equally well. The sequence is that of dTDP-4-dehydrorhamnose reductase (rfbD) from Salmonella typhimurium (strain LT2 / SGSC1412 / ATCC 700720).